The chain runs to 283 residues: Elongation factor Ts (283 aa).

An involved in Mg(2+) ion dislocation from EF-Tu region spans residues 80–83 (TDFV).

This sequence belongs to the EF-Ts family.

It localises to the cytoplasm. Its function is as follows. Associates with the EF-Tu.GDP complex and induces the exchange of GDP to GTP. It remains bound to the aminoacyl-tRNA.EF-Tu.GTP complex up to the GTP hydrolysis stage on the ribosome. The protein is Elongation factor Ts of Histophilus somni (strain 129Pt) (Haemophilus somnus).